Here is a 167-residue protein sequence, read N- to C-terminus: Phosphopantetheine adenylyltransferase (167 aa).

Position 8 (Ser8) interacts with substrate. Residues 8-9 (SF) and His16 each bind ATP. The substrate site is built by Lys40, Leu74, and Arg88. ATP is bound by residues 89 to 91 (GLR), Glu99, and 123 to 129 (WSFVSSS).

Belongs to the bacterial CoaD family. Homohexamer. Mg(2+) is required as a cofactor.

Its subcellular location is the cytoplasm. The catalysed reaction is (R)-4'-phosphopantetheine + ATP + H(+) = 3'-dephospho-CoA + diphosphate. Its pathway is cofactor biosynthesis; coenzyme A biosynthesis; CoA from (R)-pantothenate: step 4/5. In terms of biological role, reversibly transfers an adenylyl group from ATP to 4'-phosphopantetheine, yielding dephospho-CoA (dPCoA) and pyrophosphate. The chain is Phosphopantetheine adenylyltransferase from Deinococcus radiodurans (strain ATCC 13939 / DSM 20539 / JCM 16871 / CCUG 27074 / LMG 4051 / NBRC 15346 / NCIMB 9279 / VKM B-1422 / R1).